Consider the following 137-residue polypeptide: Phosphoribosyl-AMP cyclohydrolase (137 aa).

D84 is a binding site for Mg(2+). C85 lines the Zn(2+) pocket. Positions 86 and 88 each coordinate Mg(2+). Residues C101 and C108 each contribute to the Zn(2+) site.

The protein belongs to the PRA-CH family. As to quaternary structure, homodimer. It depends on Mg(2+) as a cofactor. Zn(2+) is required as a cofactor.

It localises to the cytoplasm. The catalysed reaction is 1-(5-phospho-beta-D-ribosyl)-5'-AMP + H2O = 1-(5-phospho-beta-D-ribosyl)-5-[(5-phospho-beta-D-ribosylamino)methylideneamino]imidazole-4-carboxamide. It functions in the pathway amino-acid biosynthesis; L-histidine biosynthesis; L-histidine from 5-phospho-alpha-D-ribose 1-diphosphate: step 3/9. Its function is as follows. Catalyzes the hydrolysis of the adenine ring of phosphoribosyl-AMP. The polypeptide is Phosphoribosyl-AMP cyclohydrolase (Chlorobium limicola (strain DSM 245 / NBRC 103803 / 6330)).